We begin with the raw amino-acid sequence, 626 residues long: Phosphomethylpyrimidine synthase (626 aa).

Residues 1 to 27 (MSKQEKAISLSESAQVDQQSVQPLPNS) are disordered. Residues 10–25 (LSESAQVDQQSVQPLP) are compositionally biased toward polar residues. Residues asparagine 232, methionine 261, tyrosine 290, histidine 326, 346 to 348 (SRG), 387 to 390 (DGLR), and glutamate 426 contribute to the substrate site. Histidine 430 lines the Zn(2+) pocket. Tyrosine 453 contacts substrate. Residue histidine 494 participates in Zn(2+) binding. 3 residues coordinate [4Fe-4S] cluster: cysteine 574, cysteine 577, and cysteine 582.

This sequence belongs to the ThiC family. As to quaternary structure, homodimer. [4Fe-4S] cluster is required as a cofactor.

The catalysed reaction is 5-amino-1-(5-phospho-beta-D-ribosyl)imidazole + S-adenosyl-L-methionine = 4-amino-2-methyl-5-(phosphooxymethyl)pyrimidine + CO + 5'-deoxyadenosine + formate + L-methionine + 3 H(+). It functions in the pathway cofactor biosynthesis; thiamine diphosphate biosynthesis. Its function is as follows. Catalyzes the synthesis of the hydroxymethylpyrimidine phosphate (HMP-P) moiety of thiamine from aminoimidazole ribotide (AIR) in a radical S-adenosyl-L-methionine (SAM)-dependent reaction. This Pseudomonas entomophila (strain L48) protein is Phosphomethylpyrimidine synthase.